Consider the following 129-residue polypeptide: Azurin iso-2 (129 aa).

The Plastocyanin-like domain maps to 1–129 (ASCETTVTSG…MMRGTLKLEE (129 aa)). Cys-3 and Cys-26 are disulfide-bonded. 4 residues coordinate Cu cation: His-46, Cys-112, His-117, and Met-121.

The protein localises to the periplasm. This methylothroph organism uses azurin in the oxidation of methylamine. Iso-2 is probably the acceptor of electrons from methylamine dehydrogenase. This is Azurin iso-2 from Methylomonas sp. (strain J).